The chain runs to 326 residues: Vitamin B12 import system permease protein BtuC (326 aa).

9 helical membrane-spanning segments follow: residues 15-35, 61-81, 88-108, 112-132, 146-166, 184-204, 240-260, 274-294, and 302-322; these read WLLC…CAGE, LAVL…QALF, PGLL…VLLG, LPNW…TLIL, LLAG…AIYF, GGVD…LLWI, GWMV…GLVI, VLLP…DVVA, and ELPI…WLLL.

This sequence belongs to the binding-protein-dependent transport system permease family. FecCD subfamily. As to quaternary structure, the complex is composed of two ATP-binding proteins (BtuD), two transmembrane proteins (BtuC) and a solute-binding protein (BtuF).

Its subcellular location is the cell inner membrane. In terms of biological role, part of the ABC transporter complex BtuCDF involved in vitamin B12 import. Involved in the translocation of the substrate across the membrane. This Escherichia coli (strain SE11) protein is Vitamin B12 import system permease protein BtuC.